The primary structure comprises 633 residues: Pesticidal crystal protein Cry2Aa (633 aa).

It belongs to the delta endotoxin family.

Its function is as follows. Promotes colloidosmotic lysis by binding to the midgut epithelial cells of both dipteran (Aedes aegypti) and lepidopteran (Manduca sexta) larvae. This chain is Pesticidal crystal protein Cry2Aa (cry2Aa), found in Bacillus thuringiensis subsp. kenyae.